We begin with the raw amino-acid sequence, 365 residues long: Nicotinate N-methyltransferase 1 (365 aa).

Asp-232 is a binding site for S-adenosyl-L-methionine.

This sequence belongs to the class I-like SAM-binding methyltransferase superfamily. Cation-independent O-methyltransferase family.

It carries out the reaction nicotinate + S-adenosyl-L-methionine = N-methylnicotinate + S-adenosyl-L-homocysteine. In terms of biological role, involved in nicotinate detoxification in planta. Catalyzes the conversion of nicotinate to N-methylnicotinate, which is a detoxified form of endogenous nicotinate in planta. The chain is Nicotinate N-methyltransferase 1 from Oryza sativa subsp. japonica (Rice).